Reading from the N-terminus, the 156-residue chain is Endogenous retrovirus group K member 25 Pro protein (156 aa).

Residues 21–96 form the Peptidase A2 domain; sequence FEGLVDTGAD…IPLNLWGRDL (76 aa). The active site involves D26. The region spanning 111–156 is the G-patch domain; sequence YSPTSQKIMTKMGYIPGKGLGKNEDGIKIPVEAKINQKREGIGYPF.

It belongs to the peptidase A2 family. HERV class-II K(HML-2) subfamily. As to quaternary structure, active as a homodimer. Post-translationally, autoproteolytically processed at the N-terminus. Expected C-terminal autoprocessing not detected. The sequence shown is that of the processed Pro protein.

The enzyme catalyses Processing at the authentic HIV-1 PR recognition site and release of the mature p17 matrix and the p24 capsid protein, as a result of the cleavage of the -SQNY-|-PIVQ- cleavage site.. Retroviral proteases have roles in processing of the primary translation products and the maturation of the viral particle. Endogenous Pro proteins may have kept, lost or modified their original function during evolution. This endogenous protein has retained most of the characteristics of retroviral proteases. This Homo sapiens (Human) protein is Endogenous retrovirus group K member 25 Pro protein (ERVK-25).